The following is a 478-amino-acid chain: MDETSPLVSPERAQPPEYTFPSVSGAHFPQVPGGAVRVAAAGSGPSPPCSPGHDRERQPLLDRARGAAAQGQTHTVAAQAQALAAQAAVAVHAVQTHRERNDFPEDPEFEVVVRQAEIAIECSIYPERIYQGSSGSYFVKDSQGRIIAVFKPKNEEPYGNLNPKWTKWLQKLCCPCCFGRDCLVLNQGYLSEAGASLVDQKLELNIVPRTKVVYLASETFNYSAIDRVKSRGKRLALEKVPKVGQRFNRIGLPPKVGSFQLFVEGYKDADYWLRRFEAEPLPENTNRQLLLQFERLVVLDYIIRNTDRGNDNWLIKYDYPMDNPNCRDTDWVMVREPVIKVAAIDNGLAFPLKHPDSWRAYPFYWAWLPQAKVPFSQEIKDLILPKISDPNFVKDLEEDLYELFKKDPGFDRGQFHKQIAVMRGQILNLTQALKDNKSPLHLVQMPPVIVETARSHQRSSSESYTQSFQSRKPFFSWW.

At Met-1 the chain carries N-acetylmethionine. A disordered region spans residues 1-57 (MDETSPLVSPERAQPPEYTFPSVSGAHFPQVPGGAVRVAAAGSGPSPPCSPGHDRER). Ser-5, Ser-9, Ser-43, Ser-46, and Ser-50 each carry phosphoserine. Positions 31–44 (VPGGAVRVAAAGSG) are enriched in low complexity. The PI3K/PI4K catalytic domain maps to 123-452 (SIYPERIYQG…VQMPPVIVET (330 aa)). Residues 129–135 (IYQGSSG) form a G-loop region. ATP-binding positions include 130–136 (YQGSSGS) and Lys-151. The tract at residues 156–158 (EPY) is important for substrate binding. The segment at 164-177 (KWTKWLQKLCCPCC) is important for interaction with membranes. S-palmitoyl cysteine attachment occurs at residues Cys-173, Cys-174, Cys-176, and Cys-177. 260–263 (QLFV) serves as a coordination point for ATP. Residues 267–275 (KDADYWLRR) form an important for interaction with membranes region. The tract at residues 304–312 (RNTDRGNDN) is catalytic loop. Positions 343 to 363 (AIDNGLAFPLKHPDSWRAYPF) are activation loop. Residue Asp-345 participates in ATP binding. An important for interaction with membranes region spans residues 358 to 367 (WRAYPFYWAW). Ser-461 bears the Phosphoserine mark.

The protein belongs to the PI3/PI4-kinase family. Type II PI4K subfamily. In terms of assembly, associates with the BLOC-1 and the AP-3 complexes; the BLOC-1 complex is required for optimal binding of PI4K2A to the AP-3 complex. Interacts with BLOC1S5 and DTNBP1. Interacts with FOS; this interaction may enhance phosphatidylinositol phosphorylation activity. Interacts with ITCH. Interacts with ATG9A. Post-translationally, ubiquitinated by ITCH; this does not lead to proteasomal degradation. Palmitoylated. Palmitoylated by ZDHHC3 and ZDHHC7 in the CCPCC motif. Palmitoylation is cholesterol-dependent, and required for TGN localization. As to expression, detected in adult brain, especially in neurons in the cerebellum, brain cortex, dorsal root ganglion and spinal cord (at protein level).

Its subcellular location is the golgi apparatus. It is found in the trans-Golgi network membrane. The protein resides in the membrane raft. It localises to the endosome. The protein localises to the endosome membrane. Its subcellular location is the cytoplasmic vesicle. It is found in the cell projection. The protein resides in the dendrite. It localises to the presynaptic cell membrane. The protein localises to the synapse. Its subcellular location is the synaptosome. It is found in the mitochondrion. The protein resides in the membrane. It localises to the cell membrane. The protein localises to the perikaryon. Its subcellular location is the neuron projection. The enzyme catalyses a 1,2-diacyl-sn-glycero-3-phospho-(1D-myo-inositol) + ATP = a 1,2-diacyl-sn-glycero-3-phospho-(1D-myo-inositol 4-phosphate) + ADP + H(+). Its function is as follows. Membrane-bound phosphatidylinositol-4 kinase (PI4-kinase) that catalyzes the phosphorylation of phosphatidylinositol (PI) to phosphatidylinositol 4-phosphate (PI4P), a lipid that plays important roles in endocytosis, Golgi function, protein sorting and membrane trafficking and is required for prolonged survival of neurons. Besides, phosphorylation of phosphatidylinositol (PI) to phosphatidylinositol 4-phosphate (PI4P) is the first committed step in the generation of phosphatidylinositol 4,5-bisphosphate (PIP2), a precursor of the second messenger inositol 1,4,5-trisphosphate (InsP3). The chain is Phosphatidylinositol 4-kinase type 2-alpha (Pi4k2a) from Rattus norvegicus (Rat).